Reading from the N-terminus, the 345-residue chain is L-threonine 3-dehydrogenase (345 aa).

A Zn(2+)-binding site is contributed by Cys-42. Catalysis depends on charge relay system residues Thr-44 and His-47. Zn(2+) is bound by residues His-67, Glu-68, Cys-97, Cys-100, Cys-103, and Cys-111. Residues Ile-179, Asp-199, Arg-204, 266–268, and 290–291 each bind NAD(+); these read LGI and IY.

Belongs to the zinc-containing alcohol dehydrogenase family. As to quaternary structure, homotetramer. Requires Zn(2+) as cofactor.

The protein localises to the cytoplasm. It catalyses the reaction L-threonine + NAD(+) = (2S)-2-amino-3-oxobutanoate + NADH + H(+). The protein operates within amino-acid degradation; L-threonine degradation via oxydo-reductase pathway; glycine from L-threonine: step 1/2. Its function is as follows. Catalyzes the NAD(+)-dependent oxidation of L-threonine to 2-amino-3-ketobutyrate. This is L-threonine 3-dehydrogenase from Rhizobium johnstonii (strain DSM 114642 / LMG 32736 / 3841) (Rhizobium leguminosarum bv. viciae).